The sequence spans 276 residues: Cell division protein FtsQ (276 aa).

The Cytoplasmic segment spans residues methionine 1 to glycine 27. A helical transmembrane segment spans residues isoleucine 28–tryptophan 48. The Periplasmic portion of the chain corresponds to methionine 49–glutamine 276. Positions leucine 55–tyrosine 126 constitute a POTRA domain. The tract at residues glycine 255–glutamine 276 is disordered. A compositionally biased stretch (low complexity) spans glutamine 266–glutamine 276.

The protein belongs to the FtsQ/DivIB family. FtsQ subfamily. In terms of assembly, part of a complex composed of FtsB, FtsL and FtsQ. The complex can be formed before its localization to the division site. This tripartite complex can be divided further into a subcomplex of FtsB and FtsL, which forms in the absence of FtsQ. Interacts with FtsA, FtsK, FtsL, FtsB, FtsW, FtsI, FtsN, FtsX and YmgF.

It localises to the cell inner membrane. Its function is as follows. Essential cell division protein. May link together the upstream cell division proteins, which are predominantly cytoplasmic, with the downstream cell division proteins, which are predominantly periplasmic. May control correct divisome assembly. The sequence is that of Cell division protein FtsQ from Escherichia coli (strain K12).